A 275-amino-acid chain; its full sequence is Large ribosomal subunit protein uL2 (275 aa).

2 disordered regions span residues 38–59 (TRGS…GGHK) and 223–275 (VAMN…RKRK). Over residues 50 to 59 (TVRHRGGGHK) the composition is skewed to basic residues. Basic and acidic residues predominate over residues 229-244 (DHPHGGGEGRTGEARE).

The protein belongs to the universal ribosomal protein uL2 family. Part of the 50S ribosomal subunit. Forms a bridge to the 30S subunit in the 70S ribosome.

Functionally, one of the primary rRNA binding proteins. Required for association of the 30S and 50S subunits to form the 70S ribosome, for tRNA binding and peptide bond formation. It has been suggested to have peptidyltransferase activity; this is somewhat controversial. Makes several contacts with the 16S rRNA in the 70S ribosome. In Bordetella bronchiseptica (strain ATCC BAA-588 / NCTC 13252 / RB50) (Alcaligenes bronchisepticus), this protein is Large ribosomal subunit protein uL2.